We begin with the raw amino-acid sequence, 645 residues long: MDTNTSGEELLAKARKPYTITKQRERWTEDEHERFLEALRLYGRAWQRIEEHIGTKTAVQIRSHAQKFFTKLEKEAEVKGIPVCQALDIEIPPPRPKRKPNTPYPRKPGNNGTSSSQVSSAKDAKLVSSASSSQLNQAFLDLEKMPFSEKTSTGKENQDENCSGVSTVNKYPLPTKQVSGDIETSKTSTVDNAVQDVPKKNKDKDGNDGTTVHSMQNYPWHFHADIVNGNIAKCPQNHPSGMVSQDFMFHPMREETHGHANLQATTASATTTASHQAFPACHSQDDYRSFLQISSTFSNLIMSTLLQNPAAHAAATFAASVWPYASVGNSGDSSTPMSSSPPSITAIAAATVAAATAWWASHGLLPVCAPAPITCVPFSTVAVPTPAMTEMDTVENTQPFEKQNTALQDQNLASKSPASSSDDSDETGVTKLNADSKTNDDKIEEVVVTAAVHDSNTAQKKNLVDRSSCGSNTPSGSDAETDALDKMEKDKEDVKETDENQPDVIELNNRKIKMRDNNSNNNATTDSWKEVSEEGRIAFQALFARERLPQSFSPPQVAENVNRKQSDTSMPLAPNFKSQDSCAADQEGVVMIGVGTCKSLKTRQTGFKPYKRCSMEVKESQVGNINNQSDEKVCKRLRLEGEAST.

Residue Ser6 is modified to Phosphoserine. Residues 19 to 73 (TITKQRERWTEDEHERFLEALRLYGRAWQRIEEHIGTKTAVQIRSHAQKFFTKLE) enclose the HTH myb-type domain. Positions 46 to 69 (WQRIEEHIGTKTAVQIRSHAQKFF) form a DNA-binding region, H-T-H motif. Disordered regions lie at residues 89–127 (IEIPPPRPKRKPNTPYPRKPGNNGTSSSQVSSAKDAKLV), 149–212 (EKTS…GTTV), 410–437 (QNLASKSPASSSDDSDETGVTKLNADSK), and 458–500 (AQKK…TDEN). Polar residues predominate over residues 110–120 (NNGTSSSQVSS). The segment covering 149–158 (EKTSTGKENQ) has biased composition (basic and acidic residues). Positions 159-169 (DENCSGVSTVN) are enriched in polar residues. The span at 197-207 (VPKKNKDKDGN) shows a compositional bias: basic and acidic residues. Residues 468–478 (SCGSNTPSGSD) are compositionally biased toward polar residues. Basic and acidic residues predominate over residues 483–498 (ALDKMEKDKEDVKETD).

Homodimer or heterodimer with CCA1. Interacts with CCA1 (via internal domain); independently of photoperiod. Functions probably as part of a large complex. Interacts with CKB1 and CKB3. Interacts with LNK1 and LNK2. Post-translationally, phosphorylated by CK2. In terms of tissue distribution, expressed in leaves, roots, stems, flowers and siliques.

The protein localises to the nucleus. In terms of biological role, transcription factor involved in the circadian clock. Binds to the promoter region of APRR1/TOC1 and TCP21/CHE to repress their transcription. Represses both CCA1 and itself. May recognize the promoter of JMJ14 to regulates its expression during the night in a circadian manner. The chain is Protein LHY from Arabidopsis thaliana (Mouse-ear cress).